The following is a 342-amino-acid chain: 4-hydroxythreonine-4-phosphate dehydrogenase (342 aa).

His-140 and Thr-141 together coordinate substrate. Residues His-175, His-220, and His-275 each coordinate a divalent metal cation. Residues Lys-283, Asn-292, and Arg-301 each contribute to the substrate site.

This sequence belongs to the PdxA family. As to quaternary structure, homodimer. It depends on Zn(2+) as a cofactor. Mg(2+) is required as a cofactor. The cofactor is Co(2+).

The protein localises to the cytoplasm. The enzyme catalyses 4-(phosphooxy)-L-threonine + NAD(+) = 3-amino-2-oxopropyl phosphate + CO2 + NADH. It participates in cofactor biosynthesis; pyridoxine 5'-phosphate biosynthesis; pyridoxine 5'-phosphate from D-erythrose 4-phosphate: step 4/5. Its function is as follows. Catalyzes the NAD(P)-dependent oxidation of 4-(phosphooxy)-L-threonine (HTP) into 2-amino-3-oxo-4-(phosphooxy)butyric acid which spontaneously decarboxylates to form 3-amino-2-oxopropyl phosphate (AHAP). In Rhizobium meliloti (strain 1021) (Ensifer meliloti), this protein is 4-hydroxythreonine-4-phosphate dehydrogenase.